The following is a 68-amino-acid chain: Beta-defensin 1 (68 aa).

The first 21 residues, 1–21 (MRTSYLLLFTLCLLLSEIASG), serve as a signal peptide directing secretion. The propeptide occupies 22–32 (GNFLTGLGHRS). 3 cysteine pairs are disulfide-bonded: cysteine 37-cysteine 66, cysteine 44-cysteine 59, and cysteine 49-cysteine 67.

The protein belongs to the beta-defensin family. In terms of assembly, monomer. Homodimer.

Its subcellular location is the secreted. It is found in the membrane. Has bactericidal activity. May act as a ligand for C-C chemokine receptor CCR6. Positively regulates the sperm motility and bactericidal activity in a CCR6-dependent manner. Binds to CCR6 and triggers Ca2+ mobilization in the sperm which is important for its motility. The chain is Beta-defensin 1 (DEFB1) from Gorilla gorilla gorilla (Western lowland gorilla).